A 392-amino-acid chain; its full sequence is Zinc finger protein ham-2 (392 aa).

2 consecutive C2H2-type zinc fingers follow at residues 16 to 39 and 43 to 66; these read FPCS…MQAH and YTCT…YRVH. Residues 72 to 95 form a C2H2-type 3; degenerate zinc finger; sequence FMCRCCNWAFPDKTSLHIHMQSML. Disordered stretches follow at residues 106–130 and 278–303; these read LAKS…PFSP and HISH…HSGE. The span at 112-123 shows a compositional bias: polar residues; it reads VVDSTSESGSPR. Over residues 289–303 the composition is skewed to low complexity; it reads SDSHISGGSSSHSGE.

It is found in the nucleus. Probable transcription factor that acts downstream of egl-15, to promote migration of the HSN motor neurons from the tail to the gonad primordium during HSN cell differentiation. The chain is Zinc finger protein ham-2 from Caenorhabditis elegans.